The primary structure comprises 122 residues: Small ribosomal subunit protein uS13 (122 aa).

A disordered region spans residues 93-122; it reads RKGLPVRGQTTKNNARTRKGKRKTVGSASK. Residues 107–116 are compositionally biased toward basic residues; that stretch reads ARTRKGKRKT.

The protein belongs to the universal ribosomal protein uS13 family. In terms of assembly, part of the 30S ribosomal subunit. Forms a loose heterodimer with protein S19. Forms two bridges to the 50S subunit in the 70S ribosome.

In terms of biological role, located at the top of the head of the 30S subunit, it contacts several helices of the 16S rRNA. In the 70S ribosome it contacts the 23S rRNA (bridge B1a) and protein L5 of the 50S subunit (bridge B1b), connecting the 2 subunits; these bridges are implicated in subunit movement. Contacts the tRNAs in the A and P-sites. The chain is Small ribosomal subunit protein uS13 from Wolinella succinogenes (strain ATCC 29543 / DSM 1740 / CCUG 13145 / JCM 31913 / LMG 7466 / NCTC 11488 / FDC 602W) (Vibrio succinogenes).